A 293-amino-acid polypeptide reads, in one-letter code: C-type lectin domain family 4 member G (293 aa).

The Cytoplasmic segment spans residues 1–31 (MDTTRYSKWGGSSEEVPGGPWGRWVHWSRRP). A Phosphoserine modification is found at serine 12. The helical; Signal-anchor for type II membrane protein transmembrane segment at 32–52 (LFLALAVLVTTVLWAVILSIL) threads the bilayer. Topologically, residues 53 to 293 (LSKASTERAA…GWICEKRHNC (241 aa)) are extracellular. The N-linked (GlcNAc...) asparagine glycan is linked to asparagine 73. Residues 96-136 (SGTQAQLQTTRAELGEAQAKLMEQESALRELRERVTQGLAE) are a coiled coil. An N-linked (GlcNAc...) asparagine glycan is attached at asparagine 159. A C-type lectin domain is found at 172 to 287 (FEGSCYFFSV…CDSEKDGWIC (116 aa)). Cysteines 264 and 278 form a disulfide.

(Microbial infection) Interacts with Japanese encephalitis virus envelope protein E. As to quaternary structure, (Microbial infection) Interacts with ebolavirus glycoprotein. In terms of assembly, (Microbial infection) Interacts with SARS-CoV spike glycoprotein. (Microbial infection) Interacts with lassa virus and Lymphocytic choriomeningitis virus glycoprotein. In terms of tissue distribution, expressed exclusively in fetal and adult liver and in lymph nodes. Specifically expressed by endothelial cells lining lymph node and liver sinuses (at protein level).

It is found in the cell membrane. In terms of biological role, binds mannose, N-acetylglucosamine (GlcNAc) and fucose, but not galactose, in a Ca(2+)-dependent manner, in vitro. Functionally, (Microbial infection) Acts as a receptor for Japanese encephalitis virus. (Microbial infection) Acts as a receptor for Ebolavirus. Its function is as follows. (Microbial infection) Acts as a receptor for SARS-CoV. In terms of biological role, (Microbial infection) Acts as a receptor for Lassa virus and Lymphocytic choriomeningitis virus glycoprotein. This chain is C-type lectin domain family 4 member G (CLEC4G), found in Homo sapiens (Human).